Here is a 1234-residue protein sequence, read N- to C-terminus: Transcription-repair-coupling factor (1234 aa).

One can recognise a Helicase ATP-binding domain in the interval 663-824; the sequence is DMEKPIPMDR…LAGIREMSTI (162 aa). Residue 676-683 participates in ATP binding; sequence GDVGYGKT. Residues 777-780 carry the DEEQ box motif; the sequence is DEEQ. The Helicase C-terminal domain maps to 842-999; sequence DDKQIAAALR…GMAVALKDLE (158 aa). A disordered region spans residues 1207-1234; the sequence is RQHIGITNPSPPGEDGRGRNTTIKERQP. Basic and acidic residues predominate over residues 1220 to 1234; that stretch reads EDGRGRNTTIKERQP.

The protein in the N-terminal section; belongs to the UvrB family. It in the C-terminal section; belongs to the helicase family. RecG subfamily.

It is found in the cytoplasm. Functionally, couples transcription and DNA repair by recognizing RNA polymerase (RNAP) stalled at DNA lesions. Mediates ATP-dependent release of RNAP and its truncated transcript from the DNA, and recruitment of nucleotide excision repair machinery to the damaged site. This is Transcription-repair-coupling factor from Mycobacterium bovis (strain ATCC BAA-935 / AF2122/97).